A 359-amino-acid polypeptide reads, in one-letter code: uncharacterized protein (359 aa).

Residues 43–309 form the Protein kinase domain; sequence YHLIRKLGSG…VLDFLGDDWG (267 aa). ATP is bound by residues 49–57 and Lys-72; that span reads LGSGSYGRV. Asp-163 (proton acceptor) is an active-site residue. Positions 314–359 are disordered; it reads REGPGVLGSAVSYEDREEGGSSLEEWTDEGDDSKSGGRTGTDGGAP. Gly residues predominate over residues 350 to 359; it reads GRTGTDGGAP.

It belongs to the protein kinase superfamily. Ser/Thr protein kinase family. STKL subfamily.

It carries out the reaction L-seryl-[protein] + ATP = O-phospho-L-seryl-[protein] + ADP + H(+). The enzyme catalyses L-threonyl-[protein] + ATP = O-phospho-L-threonyl-[protein] + ADP + H(+). This is an uncharacterized protein from Homo sapiens (Human).